Reading from the N-terminus, the 440-residue chain is Alpha-ionylideneethane synthase aba3 (440 aa).

It belongs to the alpha-ionylideneethane synthase family.

Its pathway is hormone biosynthesis. Its function is as follows. Alpha-ionylideneethane synthase; part of the gene cluster that mediates the biosynthesis of abscisic acid (ABA), a phytohormone that acts antagonistically toward salicylic acid (SA), jasmonic acid (JA) and ethylene (ETH) signaling, to impede plant defense responses. The first step of the pathway catalyzes the reaction from farnesyl diphosphate to alpha-ionylideneethane performed by the alpha-ionylideneethane synthase aba3 via a three-step reaction mechanism involving 2 neutral intermediates, beta-farnesene and allofarnesene. The cytochrome P450 monooxygenase aba1 might then be involved in the conversion of alpha-ionylideneethane to alpha-ionylideneacetic acid. Alpha-ionylideneacetic acid is further converted to abscisic acid in 2 steps involving the cytochrome P450 monooxygenase aba2 and the short-chain dehydrogenase/reductase aba4, via the intermediates 1'-deoxy-ABA or 1',4'-trans-diol-ABA, depending on the order of action of these 2 enzymes. Aba2 is responsible for the hydroxylation of carbon atom C-1' and aba4 might be involved in the oxidation of the C-4' carbon atom. In Botryotinia fuckeliana (strain B05.10) (Noble rot fungus), this protein is Alpha-ionylideneethane synthase aba3.